The following is a 988-amino-acid chain: Bifunctional glutamine synthetase adenylyltransferase/adenylyl-removing enzyme (988 aa).

The segment at 1-472 (MTKRETVERR…RYSALFEQET (472 aa)) is adenylyl removase. The interval 476–988 (GEAGNLVFTG…AFVAVVKNGG (513 aa)) is adenylyl transferase.

This sequence belongs to the GlnE family. Requires Mg(2+) as cofactor.

It carries out the reaction [glutamine synthetase]-O(4)-(5'-adenylyl)-L-tyrosine + phosphate = [glutamine synthetase]-L-tyrosine + ADP. It catalyses the reaction [glutamine synthetase]-L-tyrosine + ATP = [glutamine synthetase]-O(4)-(5'-adenylyl)-L-tyrosine + diphosphate. Its function is as follows. Involved in the regulation of glutamine synthetase GlnA, a key enzyme in the process to assimilate ammonia. When cellular nitrogen levels are high, the C-terminal adenylyl transferase (AT) inactivates GlnA by covalent transfer of an adenylyl group from ATP to specific tyrosine residue of GlnA, thus reducing its activity. Conversely, when nitrogen levels are low, the N-terminal adenylyl removase (AR) activates GlnA by removing the adenylyl group by phosphorolysis, increasing its activity. The regulatory region of GlnE binds the signal transduction protein PII (GlnB) which indicates the nitrogen status of the cell. This Agrobacterium fabrum (strain C58 / ATCC 33970) (Agrobacterium tumefaciens (strain C58)) protein is Bifunctional glutamine synthetase adenylyltransferase/adenylyl-removing enzyme.